The primary structure comprises 432 residues: Repulsive guidance molecule A (432 aa).

The signal sequence occupies residues 1 to 29; the sequence is MGRGAGSTALGLFQILPVFLCIFPPVTSP. A propeptide spans 30–149 (removed in mature form); the sequence is CKILKCNSEF…NYTHCGLFGD (120 aa). Residue Asn96 is glycosylated (N-linked (GlcNAc...) asparagine). The segment at 99 to 122 is disordered; that stretch reads KDGPTSQPRLRTLPPGDSQERSDS. Disulfide bonds link Cys126-Cys207 and Cys144-Cys296. Asn140 is a glycosylation site (N-linked (GlcNAc...) asparagine). The GPI-anchor amidated asparagine moiety is linked to residue Asn404. Positions 405-432 are cleaved as a propeptide — removed in mature form; it reads AAPSEHPWALPALWVALLSLSQCWLGLL.

The protein belongs to the repulsive guidance molecule (RGM) family. Autocatalytically cleaved at low pH; the two chains remain linked via two disulfide bonds.

The protein resides in the cell membrane. Its function is as follows. Acts as an axon-specific repulsive guidance molecule in the retinotectal system. Repulsive for a subset of axons of the temporal half of the retina. Provides thus positional information for the temporal axons invading the optic tectum in the stratum opticum. In Gallus gallus (Chicken), this protein is Repulsive guidance molecule A (RGMA).